Reading from the N-terminus, the 349-residue chain is Divinyl chlorophyll a/b light-harvesting protein PcbB (349 aa).

The next 6 helical transmembrane spans lie at 27-47, 57-77, 91-113, 201-221, 241-261, and 306-326; these read FIAAHAAHTGLIAFGCGAATL, LPMGHQSSLFLAHLASVGIGF, IAILHLILSMVYGGGGLLHSVYF, VMGGHAFLAFFQLGGGAFHIA, AILSWSLAGIGWMACVAAFWA, and LVNVHYYLGFFFIQGHLWHAL.

The protein belongs to the PsbB/PsbC family. IsiA/Pcb subfamily. In terms of assembly, the antenna complex consists of divinyl chlorophylls (a and b) and divinyl chlorophyll a/b binding proteins and binds more divinyl chlorophyll b than does the antenna complex from high-light-adapted Prochlorococcus. The cofactor is divinyl chlorophyll a. It depends on divinyl chlorophyll b as a cofactor.

It is found in the cellular thylakoid membrane. In terms of biological role, the antenna complex functions as a light receptor, it captures and delivers excitation energy to photosystems II and I. The Prochlorales pcb genes are not related to higher plant LHCs. This is Divinyl chlorophyll a/b light-harvesting protein PcbB (pcbB) from Prochlorococcus marinus (strain SARG / CCMP1375 / SS120).